The following is a 282-amino-acid chain: NH(3)-dependent NAD(+) synthetase (282 aa).

51 to 58 is a binding site for ATP; it reads GISGGVDS. Position 57 (aspartate 57) interacts with Mg(2+). Residue arginine 148 coordinates deamido-NAD(+). Threonine 168 contributes to the ATP binding site. Residue glutamate 173 coordinates Mg(2+). 2 residues coordinate deamido-NAD(+): lysine 181 and aspartate 188. The ATP site is built by lysine 197 and threonine 219. 268 to 269 lines the deamido-NAD(+) pocket; it reads HK.

It belongs to the NAD synthetase family. In terms of assembly, homodimer.

It carries out the reaction deamido-NAD(+) + NH4(+) + ATP = AMP + diphosphate + NAD(+) + H(+). It functions in the pathway cofactor biosynthesis; NAD(+) biosynthesis; NAD(+) from deamido-NAD(+) (ammonia route): step 1/1. Catalyzes the ATP-dependent amidation of deamido-NAD to form NAD. Uses ammonia as a nitrogen source. The protein is NH(3)-dependent NAD(+) synthetase of Burkholderia cenocepacia (strain ATCC BAA-245 / DSM 16553 / LMG 16656 / NCTC 13227 / J2315 / CF5610) (Burkholderia cepacia (strain J2315)).